Reading from the N-terminus, the 158-residue chain is Histone H2B.1 (158 aa).

Residues Lys-7 and Lys-25 each carry the N6-acetyllysine modification. 2 disordered regions span residues 26 to 45 (AAAG…PKKG) and 135 to 158 (VHNF…GQQT). The segment covering 135–144 (VHNFESETSK) has biased composition (basic and acidic residues). The segment covering 147–158 (SQGRKRGRGQQT) has biased composition (basic residues).

Belongs to the histone H2B family. In terms of assembly, the nucleosome is a histone octamer containing two molecules each of H2A, H2B, H3 and H4 assembled in one H3-H4 heterotetramer and two H2A-H2B heterodimers. The octamer wraps approximately 147 bp of DNA. Can be acetylated to form H2BK6ac and H2BK33ac. In terms of tissue distribution, expressed in the generative cell within the bicellular pollen. Not detected in other reproductive or vegetative tissues.

The protein resides in the nucleus. Its subcellular location is the chromosome. Its function is as follows. Core component of nucleosome. Nucleosomes wrap and compact DNA into chromatin, limiting DNA accessibility to the cellular machineries which require DNA as a template. Histones thereby play a central role in transcription regulation, DNA repair, DNA replication and chromosomal stability. DNA accessibility is regulated via a complex set of post-translational modifications of histones, also called histone code, and nucleosome remodeling. The polypeptide is Histone H2B.1 (Lilium longiflorum (Trumpet lily)).